Reading from the N-terminus, the 116-residue chain is U11-theraphotoxin-Hhn1b (116 aa).

The first 21 residues, Met1–Ala21, serve as a signal peptide directing secretion. The propeptide occupies Asp22–Arg74. The interval Glu61–Asp83 is disordered. Intrachain disulfides connect Cys75-Cys90, Cys82-Cys95, and Cys89-Cys110.

Belongs to the neurotoxin 14 (magi-1) family. 01 (HNTX-16) subfamily. As to expression, expressed by the venom gland.

It is found in the secreted. Its function is as follows. Probable ion channel inhibitor. In Cyriopagopus hainanus (Chinese bird spider), this protein is U11-theraphotoxin-Hhn1b.